Consider the following 1310-residue polypeptide: Rho family-interacting cell polarization regulator 2 (1310 aa).

Phosphoserine is present on residues S123 and S178. Residues 196 to 254 (MHNLGHKNTNTPKEPQPKRVEEVYRALKNGLDEYLEFHQTELDKLTAQLKDMKRNSRLG) are involved in cell filopodia formation. A coiled-coil region spans residues 224 to 253 (NGLDEYLEFHQTELDKLTAQLKDMKRNSRL). S508 bears the Phosphoserine mark. Residues 588–608 (SSLSSQNEGTEDSSSASSRNS) show a composition bias toward polar residues. Residues 588–639 (SSLSSQNEGTEDSSSASSRNSLGEDHEPKSHSKSDTVEPKKPSVDARSGTES) form a disordered region. Residues 609-631 (LGEDHEPKSHSKSDTVEPKKPSV) are compositionally biased toward basic and acidic residues. Position 682 is a phosphoserine (S682).

This sequence belongs to the RIPOR family. In terms of assembly, homooligomer; homooligomerization is regulated by RHOC and leads to the formation of concatemers through the association of N- and C-termini. Interacts (phosphorylated form) with 14-3-3 proteins; these interactions occur during myogenic cell differentiation and also induces T cell proliferation arrest. Interacts (phosphorylated form) with HDAC6; this interaction occurs during early myogenic differentiation, prevents HDAC6 to deacetylate tubulin and also induces T cell proliferation arrest. Interacts with DYSF; this interaction occurs during early myogenic differentiation. Interacts with MYOF. Interacts (via active GTP- or inactive GDP-bound forms) with RHOA; this interaction is direct, blocks the loading of GTP to RHOA and decreases upon chemokine CCL19 stimulation in primary T lymphocytes. Interacts with RHOC. Interacts (via phosphorylated form) with YWHAB; this interaction occurs in a chemokine-dependent manner and does not compete for binding of RIPOR2 with RHOA nor blocks inhibition of RIPOR2-mediated RHOA activity. Interacts with YWHAE. Interacts with YWHAQ. Post-translationally, phosphorylated. Chemokine-induced phosphorylation in neutrophils occurs in a PKC- and AKT-dependent manner, resulting in RIPOR2 interaction with YWHAB and stabilization. Phosphorylated by PKCA, AKT1 and MAPKAPK1A; in vitro. In terms of tissue distribution, expressed in the cochlea (at protein level).

The protein resides in the cytoplasm. Its subcellular location is the cytoskeleton. It localises to the cell projection. The protein localises to the filopodium. It is found in the apical cell membrane. The protein resides in the stereocilium. Its subcellular location is the stereocilium membrane. Acts as an inhibitor of the small GTPase RHOA and plays several roles in the regulation of myoblast and hair cell differentiation, lymphocyte T proliferation and neutrophil polarization. Plays a role in fetal mononuclear myoblast differentiation by promoting filopodia and myotube formation. Maintains naive T lymphocytes in a quiescent state and prevents chemokine-induced T lymphocyte responses, such as cell adhesion, polarization and migration. Involved also in the regulation of neutrophil polarization, chemotaxis and adhesion. Required for normal development of inner and outer hair cell stereocilia within the cochlea of the inner ear. Plays a role for maintaining the structural organization of the basal domain of stereocilia. Involved in mechanosensory hair cell function. Required for normal hearing. The chain is Rho family-interacting cell polarization regulator 2 from Rattus norvegicus (Rat).